The sequence spans 180 residues: Large ribosomal subunit protein eL18 (180 aa).

The segment at 152-180 (FGPAPGVPGSHTKPYVISKSRERTNAHRA) is disordered. Basic and acidic residues predominate over residues 170–180 (KSRERTNAHRA).

Belongs to the eukaryotic ribosomal protein eL18 family.

The protein resides in the cytoplasm. This chain is Large ribosomal subunit protein eL18 (RPL18), found in Taenia asiatica (Asian tapeworm).